Reading from the N-terminus, the 247-residue chain is Chaperone protein NfaE (247 aa).

The signal sequence occupies residues 1 to 29 (MKMRAVAVFTGMLTGVLSVTGLLSAGAYA). Residues 106–125 (GQQSSRRRSVSTGGEFPSDR) form a disordered region.

The protein belongs to the periplasmic pilus chaperone family.

The protein localises to the periplasm. Its function is as follows. Involved in the biogenesis of the NFA-I adhesin. This is Chaperone protein NfaE (nfaE) from Escherichia coli.